Consider the following 59-residue polypeptide: Preprotein translocase subunit SecG (59 aa).

Residues 1 to 33 (MARRESSGGSGGLMSSAGLMRYFEAEESAIKID) lie on the Cytoplasmic side of the membrane. Residues 34–55 (PKTVIIAAVASGAFIWILNFTY) form a helical membrane-spanning segment. At 56–59 (GRFW) the chain is on the extracellular side.

Belongs to the SEC61-beta family. In terms of assembly, component of the protein translocase complex. Heterotrimer consisting of alpha (SecY), beta (SecG) and gamma (SecE) subunits. Can form oligomers of the heterotrimer.

The protein localises to the cell membrane. Its function is as follows. Involved in protein export. The function of the beta subunit is unknown, but it may be involved in stabilization of the trimeric complex. This Methanocella arvoryzae (strain DSM 22066 / NBRC 105507 / MRE50) protein is Preprotein translocase subunit SecG.